The following is a 229-amino-acid chain: Enolase-phosphatase E1 (229 aa).

The tract at residues 207–229 is disordered; the sequence is RDPASHHPQVQRFDDIHPEQIPA. Residues 218–229 are compositionally biased toward basic and acidic residues; that stretch reads RFDDIHPEQIPA.

Belongs to the HAD-like hydrolase superfamily. MasA/MtnC family. Monomer. Mg(2+) is required as a cofactor.

It carries out the reaction 5-methylsulfanyl-2,3-dioxopentyl phosphate + H2O = 1,2-dihydroxy-5-(methylsulfanyl)pent-1-en-3-one + phosphate. The protein operates within amino-acid biosynthesis; L-methionine biosynthesis via salvage pathway; L-methionine from S-methyl-5-thio-alpha-D-ribose 1-phosphate: step 3/6. It functions in the pathway amino-acid biosynthesis; L-methionine biosynthesis via salvage pathway; L-methionine from S-methyl-5-thio-alpha-D-ribose 1-phosphate: step 4/6. Functionally, bifunctional enzyme that catalyzes the enolization of 2,3-diketo-5-methylthiopentyl-1-phosphate (DK-MTP-1-P) into the intermediate 2-hydroxy-3-keto-5-methylthiopentenyl-1-phosphate (HK-MTPenyl-1-P), which is then dephosphorylated to form the acireductone 1,2-dihydroxy-3-keto-5-methylthiopentene (DHK-MTPene). This chain is Enolase-phosphatase E1, found in Klebsiella pneumoniae (strain 342).